The sequence spans 300 residues: GTPase Era (300 aa).

The 169-residue stretch at 8 to 176 (RCGYVAIVGR…EAQIAKHLPE (169 aa)) folds into the Era-type G domain. Residues 16 to 23 (GRPNVGKS) form a G1 region. A GTP-binding site is contributed by 16–23 (GRPNVGKS). The tract at residues 42 to 46 (QTTRH) is G2. The segment at 63–66 (DTPG) is G3. Residues 63-67 (DTPGM) and 125-128 (NKTD) contribute to the GTP site. The interval 125 to 128 (NKTD) is G4. A G5 region spans residues 155–157 (ISA). The KH type-2 domain maps to 199-283 (VREKIMRQLG…MLNLWVKVKG (85 aa)).

The protein belongs to the TRAFAC class TrmE-Era-EngA-EngB-Septin-like GTPase superfamily. Era GTPase family. Monomer.

It is found in the cytoplasm. The protein localises to the cell inner membrane. An essential GTPase that binds both GDP and GTP, with rapid nucleotide exchange. Plays a role in 16S rRNA processing and 30S ribosomal subunit biogenesis and possibly also in cell cycle regulation and energy metabolism. The sequence is that of GTPase Era from Pseudomonas entomophila (strain L48).